Here is a 258-residue protein sequence, read N- to C-terminus: 4-hydroxy-tetrahydrodipicolinate reductase (258 aa).

NAD(+) is bound by residues 9–14 (GASGRM), 91–93 (GTT), and 115–118 (SPNM). The Proton donor/acceptor role is filled by histidine 148. Histidine 149 is a (S)-2,3,4,5-tetrahydrodipicolinate binding site. Lysine 152 serves as the catalytic Proton donor. 158-159 (GT) contacts (S)-2,3,4,5-tetrahydrodipicolinate.

This sequence belongs to the DapB family.

It is found in the cytoplasm. The enzyme catalyses (S)-2,3,4,5-tetrahydrodipicolinate + NAD(+) + H2O = (2S,4S)-4-hydroxy-2,3,4,5-tetrahydrodipicolinate + NADH + H(+). It catalyses the reaction (S)-2,3,4,5-tetrahydrodipicolinate + NADP(+) + H2O = (2S,4S)-4-hydroxy-2,3,4,5-tetrahydrodipicolinate + NADPH + H(+). It functions in the pathway amino-acid biosynthesis; L-lysine biosynthesis via DAP pathway; (S)-tetrahydrodipicolinate from L-aspartate: step 4/4. In terms of biological role, catalyzes the conversion of 4-hydroxy-tetrahydrodipicolinate (HTPA) to tetrahydrodipicolinate. The sequence is that of 4-hydroxy-tetrahydrodipicolinate reductase from Lawsonia intracellularis (strain PHE/MN1-00).